The sequence spans 351 residues: Methylthioribose-1-phosphate isomerase (351 aa).

Residues 53–55, Arg96, and Gln205 contribute to the substrate site; that span reads RGA. The Proton donor role is filled by Asp246. 256-257 is a substrate binding site; that stretch reads NK.

This sequence belongs to the eIF-2B alpha/beta/delta subunits family. MtnA subfamily.

It catalyses the reaction 5-(methylsulfanyl)-alpha-D-ribose 1-phosphate = 5-(methylsulfanyl)-D-ribulose 1-phosphate. It participates in amino-acid biosynthesis; L-methionine biosynthesis via salvage pathway; L-methionine from S-methyl-5-thio-alpha-D-ribose 1-phosphate: step 1/6. Catalyzes the interconversion of methylthioribose-1-phosphate (MTR-1-P) into methylthioribulose-1-phosphate (MTRu-1-P). The sequence is that of Methylthioribose-1-phosphate isomerase from Synechocystis sp. (strain ATCC 27184 / PCC 6803 / Kazusa).